Reading from the N-terminus, the 159-residue chain is Probable cyclic pyranopterin monophosphate synthase (159 aa).

Substrate contacts are provided by residues 75–77 (LCH) and 111–112 (ME). D126 is a catalytic residue.

This sequence belongs to the MoaC family. As to quaternary structure, homohexamer; trimer of dimers.

The catalysed reaction is (8S)-3',8-cyclo-7,8-dihydroguanosine 5'-triphosphate = cyclic pyranopterin phosphate + diphosphate. The protein operates within cofactor biosynthesis; molybdopterin biosynthesis. In terms of biological role, catalyzes the conversion of (8S)-3',8-cyclo-7,8-dihydroguanosine 5'-triphosphate to cyclic pyranopterin monophosphate (cPMP). This chain is Probable cyclic pyranopterin monophosphate synthase, found in Pyrococcus abyssi (strain GE5 / Orsay).